We begin with the raw amino-acid sequence, 321 residues long: Glucokinase (321 aa).

8-13 contributes to the ATP binding site; it reads GDVGGT.

The protein belongs to the bacterial glucokinase family.

The protein resides in the cytoplasm. The catalysed reaction is D-glucose + ATP = D-glucose 6-phosphate + ADP + H(+). This chain is Glucokinase, found in Shigella flexneri serotype 5b (strain 8401).